Here is a 175-residue protein sequence, read N- to C-terminus: Gamma-crystallin-1 (175 aa).

2 Beta/gamma crystallin 'Greek key' domains span residues 2–40 (GKIFFYEERNFQGRHYECGSDYSDLSSYFNRCNSIRVEG) and 41–83 (GNWI…RFLP). Positions 84–88 (NYQGQ) are connecting peptide. Beta/gamma crystallin 'Greek key' domains lie at 89-129 (YKMR…NVFD) and 130-172 (GHWM…RRVY).

Belongs to the beta/gamma-crystallin family. As to quaternary structure, monomer.

Its function is as follows. Crystallins are the dominant structural components of the vertebrate eye lens. This chain is Gamma-crystallin-1 (cryg1), found in Xenopus laevis (African clawed frog).